Here is a 337-residue protein sequence, read N- to C-terminus: Glyceraldehyde-3-phosphate dehydrogenase, cytosolic (337 aa).

The interval 1–151 is binding to NAD; the sequence is MAKVKVGING…YKSDLNIVSN (151 aa). NAD(+) is bound by residues 13-14, aspartate 35, and arginine 82; that span reads RI. Positions 152-337 are catalytic; that stretch reads ASCTTNCLAP…DLIMHISKCQ (186 aa). Residues 153-155, threonine 184, 213-214, and arginine 236 contribute to the D-glyceraldehyde 3-phosphate site; these read SCT and TG. Cysteine 154 functions as the Nucleophile in the catalytic mechanism. Asparagine 318 is a binding site for NAD(+).

It belongs to the glyceraldehyde-3-phosphate dehydrogenase family. Homotetramer.

The protein resides in the cytoplasm. The catalysed reaction is D-glyceraldehyde 3-phosphate + phosphate + NAD(+) = (2R)-3-phospho-glyceroyl phosphate + NADH + H(+). The protein operates within carbohydrate degradation; glycolysis; pyruvate from D-glyceraldehyde 3-phosphate: step 1/5. Functionally, key enzyme in glycolysis that catalyzes the first step of the pathway by converting D-glyceraldehyde 3-phosphate (G3P) into 3-phospho-D-glyceroyl phosphate. Essential for the maintenance of cellular ATP levels and carbohydrate metabolism. This is Glyceraldehyde-3-phosphate dehydrogenase, cytosolic (GAPC) from Mesembryanthemum crystallinum (Common ice plant).